The primary structure comprises 905 residues: DNA gyrase subunit A (905 aa).

The region spanning 35–524 is the Topo IIA-type catalytic domain; it reads IPDVRDGLKP…GEFDQDIEDL (490 aa). Tyrosine 123 acts as the O-(5'-phospho-DNA)-tyrosine intermediate in catalysis. Positions 551–557 match the GyrA-box motif; the sequence is QKRGGKG. Positions 882-905 are disordered; sequence IAESSDDNEEDSEFEEEVAEEGSE. Over residues 885–905 the composition is skewed to acidic residues; sequence SSDDNEEDSEFEEEVAEEGSE.

The protein belongs to the type II topoisomerase GyrA/ParC subunit family. Heterotetramer, composed of two GyrA and two GyrB chains. In the heterotetramer, GyrA contains the active site tyrosine that forms a transient covalent intermediate with DNA, while GyrB binds cofactors and catalyzes ATP hydrolysis.

The protein localises to the cytoplasm. The catalysed reaction is ATP-dependent breakage, passage and rejoining of double-stranded DNA.. Functionally, a type II topoisomerase that negatively supercoils closed circular double-stranded (ds) DNA in an ATP-dependent manner to modulate DNA topology and maintain chromosomes in an underwound state. Negative supercoiling favors strand separation, and DNA replication, transcription, recombination and repair, all of which involve strand separation. Also able to catalyze the interconversion of other topological isomers of dsDNA rings, including catenanes and knotted rings. Type II topoisomerases break and join 2 DNA strands simultaneously in an ATP-dependent manner. This chain is DNA gyrase subunit A, found in Rickettsia bellii (strain RML369-C).